Reading from the N-terminus, the 421-residue chain is Enolase (421 aa).

The Proton donor role is filled by glutamate 207. 3 residues coordinate Mg(2+): aspartate 244, glutamate 285, and aspartate 312. Lysine 337 acts as the Proton acceptor in catalysis. Lysine 337, arginine 366, serine 367, and lysine 388 together coordinate (2R)-2-phosphoglycerate.

It belongs to the enolase family. Mg(2+) is required as a cofactor.

It is found in the cytoplasm. It localises to the secreted. Its subcellular location is the cell surface. It catalyses the reaction (2R)-2-phosphoglycerate = phosphoenolpyruvate + H2O. Its pathway is carbohydrate degradation; glycolysis; pyruvate from D-glyceraldehyde 3-phosphate: step 4/5. In terms of biological role, catalyzes the reversible conversion of 2-phosphoglycerate (2-PG) into phosphoenolpyruvate (PEP). It is essential for the degradation of carbohydrates via glycolysis. The sequence is that of Enolase from Ehrlichia ruminantium (strain Gardel).